The following is a 268-amino-acid chain: Shikimate dehydrogenase (NADP(+)) (268 aa).

Shikimate-binding positions include 13-15 (SLS) and Thr60. Residue Lys64 is the Proton acceptor of the active site. Asp76 contacts NADP(+). Shikimate contacts are provided by Asn85 and Asp100. Residues 124 to 128 (GAGGA), 148 to 153 (NRTMSR), and Ile209 contribute to the NADP(+) site. Shikimate is bound at residue Tyr211. An NADP(+)-binding site is contributed by Gly232.

This sequence belongs to the shikimate dehydrogenase family. In terms of assembly, homodimer.

It carries out the reaction shikimate + NADP(+) = 3-dehydroshikimate + NADPH + H(+). The protein operates within metabolic intermediate biosynthesis; chorismate biosynthesis; chorismate from D-erythrose 4-phosphate and phosphoenolpyruvate: step 4/7. Functionally, involved in the biosynthesis of the chorismate, which leads to the biosynthesis of aromatic amino acids. Catalyzes the reversible NADPH linked reduction of 3-dehydroshikimate (DHSA) to yield shikimate (SA). In Staphylococcus haemolyticus (strain JCSC1435), this protein is Shikimate dehydrogenase (NADP(+)).